The chain runs to 217 residues: MENKFEIGRIIRAKNISDAWYRGLNIIWNHGRVITDERGSQIKEFMDLMVVIENPYTDRIPADTAWNEERLEEYAKQLISGENIQDFEYTYGQRLRNWNGEVDQIEYVIEKLKESPTSRRATAVTWIPPVDTKVNEVPCMILDDFKIRDEKVHLTTLFRSHDFGGAYPANLYGLSKLLEYVAEKVGVEPGVITTVSISAHVYDHDWDMVENIVKGIN.

Cys139 is a catalytic residue.

This sequence belongs to the thymidylate synthase family. Archaeal-type ThyA subfamily. As to quaternary structure, monomer.

The protein localises to the cytoplasm. It functions in the pathway pyrimidine metabolism; dTTP biosynthesis. Functionally, may catalyze the biosynthesis of dTMP using an unknown cosubstrate. The protein is Putative thymidylate synthase of Methanosarcina mazei (strain ATCC BAA-159 / DSM 3647 / Goe1 / Go1 / JCM 11833 / OCM 88) (Methanosarcina frisia).